The sequence spans 294 residues: Pyridoxal 5'-phosphate synthase subunit PdxS (294 aa).

D24 lines the D-ribose 5-phosphate pocket. K81 serves as the catalytic Schiff-base intermediate with D-ribose 5-phosphate. G153 lines the D-ribose 5-phosphate pocket. Residue R165 coordinates D-glyceraldehyde 3-phosphate. D-ribose 5-phosphate is bound by residues G214 and 235 to 236 (GS).

The protein belongs to the PdxS/SNZ family. As to quaternary structure, in the presence of PdxT, forms a dodecamer of heterodimers.

It carries out the reaction aldehydo-D-ribose 5-phosphate + D-glyceraldehyde 3-phosphate + L-glutamine = pyridoxal 5'-phosphate + L-glutamate + phosphate + 3 H2O + H(+). It participates in cofactor biosynthesis; pyridoxal 5'-phosphate biosynthesis. Its function is as follows. Catalyzes the formation of pyridoxal 5'-phosphate from ribose 5-phosphate (RBP), glyceraldehyde 3-phosphate (G3P) and ammonia. The ammonia is provided by the PdxT subunit. Can also use ribulose 5-phosphate and dihydroxyacetone phosphate as substrates, resulting from enzyme-catalyzed isomerization of RBP and G3P, respectively. The sequence is that of Pyridoxal 5'-phosphate synthase subunit PdxS from Bacillus velezensis (strain DSM 23117 / BGSC 10A6 / LMG 26770 / FZB42) (Bacillus amyloliquefaciens subsp. plantarum).